A 212-amino-acid polypeptide reads, in one-letter code: uncharacterized protein (212 aa).

S-adenosyl-L-methionine-binding residues include G53, E74, and D96.

Belongs to the methyltransferase superfamily. YrrT family.

Its function is as follows. Could be a S-adenosyl-L-methionine-dependent methyltransferase. This is an uncharacterized protein from Anoxybacillus flavithermus (strain DSM 21510 / WK1).